Reading from the N-terminus, the 525-residue chain is uncharacterized protein (525 aa).

2 helical membrane-spanning segments follow: residues 36–56 (AVAA…TLAL) and 61–81 (ALPA…AAAI). One can recognise a PAC domain in the interval 173–228 (SAVDIRLERTSADGPQFAHIYCEMTPLRDAEGNLLAIVAQSRDVSEEARLQAEAAA). Positions 246–466 (AVSHELRTPL…VIVVTIPSDA (221 aa)) constitute a Histidine kinase domain. His-249 is subject to Phosphohistidine; by autocatalysis. The disordered stretch occupies residues 506–525 (LHTGEIGREGGHGAAQAKTA).

Its subcellular location is the cell membrane. It catalyses the reaction ATP + protein L-histidine = ADP + protein N-phospho-L-histidine.. This is an uncharacterized protein from Rhizobium meliloti (strain 1021) (Ensifer meliloti).